We begin with the raw amino-acid sequence, 454 residues long: Tol-Pal system protein TolB (454 aa).

Positions 1-21 are cleaved as a signal peptide; that stretch reads MSLRPISLMLALLLTSAPALA.

The protein belongs to the TolB family. The Tol-Pal system is composed of five core proteins: the inner membrane proteins TolA, TolQ and TolR, the periplasmic protein TolB and the outer membrane protein Pal. They form a network linking the inner and outer membranes and the peptidoglycan layer.

The protein localises to the periplasm. Part of the Tol-Pal system, which plays a role in outer membrane invagination during cell division and is important for maintaining outer membrane integrity. The chain is Tol-Pal system protein TolB from Sphingopyxis alaskensis (strain DSM 13593 / LMG 18877 / RB2256) (Sphingomonas alaskensis).